We begin with the raw amino-acid sequence, 1380 residues long: DNA-directed RNA polymerase subunit beta (1380 aa).

This sequence belongs to the RNA polymerase beta chain family. The RNAP catalytic core consists of 2 alpha, 1 beta, 1 beta' and 1 omega subunit. When a sigma factor is associated with the core the holoenzyme is formed, which can initiate transcription.

The enzyme catalyses RNA(n) + a ribonucleoside 5'-triphosphate = RNA(n+1) + diphosphate. DNA-dependent RNA polymerase catalyzes the transcription of DNA into RNA using the four ribonucleoside triphosphates as substrates. The protein is DNA-directed RNA polymerase subunit beta of Sinorhizobium medicae (strain WSM419) (Ensifer medicae).